The following is a 608-amino-acid chain: Kelch-like protein 10 (608 aa).

Residues 39-106 form the BTB domain; the sequence is CDVVIKVNGF…AYTRTVPITP (68 aa). Kelch repeat units lie at residues 292 to 339, 340 to 386, 388 to 433, 434 to 480, 481 to 527, and 529 to 574; these read ILFA…YLKG, YVYI…VLGN, IYAM…TLYG, KVYI…AYGE, HVYA…VVDD, and LFVV…VVPG. At serine 501 the chain carries Phosphoserine.

Self-associates. Interacts with CUL3; indicative for the participation in an E3 ubiquitin ligase complex.

The protein resides in the cytoplasm. The protein operates within protein modification; protein ubiquitination. Functionally, may be a substrate-specific adapter of a CUL3-based E3 ubiquitin-protein ligase complex which mediates the ubiquitination and subsequent proteasomal degradation of target proteins during spermatogenesis. This Homo sapiens (Human) protein is Kelch-like protein 10 (KLHL10).